Here is a 199-residue protein sequence, read N- to C-terminus: MACNITNQRQQTLSTSGEALYEILGLQKGASNEDIKKTYRKLALKHHPDKNPDDPAAADKFKEINNAHTILTDMSKRNIYDKYGSLGLYVAEQFGDENVNTYFMLSSWWAKTLFVIIGLLTGCYFCCCLCCCCNCCCGRCRPKSSAPEEDFYVSPEDLEEQIKTDMEKDVDFPVVLQPTNANEKTQLIREGPRSYCTDS.

S14 and S16 each carry phosphoserine. Positions 19–84 (ALYEILGLQK…SKRNIYDKYG (66 aa)) constitute a J domain.

Interacts with the chaperone complex consisting of HSC70 and SGTA. Palmitoylated.

The protein localises to the membrane. This chain is DnaJ homolog subfamily C member 5B (DNAJC5B), found in Ailuropoda melanoleuca (Giant panda).